Reading from the N-terminus, the 20-residue chain is Hemocyanin subunit Ia (20 aa).

The segment at 1-20 is disordered; it reads ADXQPGDSTDKLLAQKQDDV.

The protein belongs to the tyrosinase family. Hemocyanin subfamily. As to quaternary structure, composed of 3 major subunits (IB, II and III) and 1 minor subunit (IA) which form homohexamers and heterohexamers. May also form larger structures. In terms of tissue distribution, hemolymph.

It localises to the secreted. The protein resides in the extracellular space. Its function is as follows. Hemocyanins are copper-containing oxygen carriers occurring freely dissolved in the hemolymph of many mollusks and arthropods. This chain is Hemocyanin subunit Ia, found in Panulirus japonicus (Japanese spiny lobster).